Reading from the N-terminus, the 525-residue chain is GMP synthase [glutamine-hydrolyzing] (525 aa).

The Glutamine amidotransferase type-1 domain occupies 9–207; that stretch reads RILILDFGSQ…VRDICQCEAL (199 aa). The active-site Nucleophile is Cys-86. Active-site residues include His-181 and Glu-183. Residues 208-400 enclose the GMPS ATP-PPase domain; the sequence is WTPAKIIDDA…LGLPYDMLYR (193 aa). 235-241 is an ATP binding site; the sequence is SGGVDSS.

Homodimer.

The enzyme catalyses XMP + L-glutamine + ATP + H2O = GMP + L-glutamate + AMP + diphosphate + 2 H(+). It functions in the pathway purine metabolism; GMP biosynthesis; GMP from XMP (L-Gln route): step 1/1. Functionally, catalyzes the synthesis of GMP from XMP. In Shigella flexneri, this protein is GMP synthase [glutamine-hydrolyzing].